The following is a 265-amino-acid chain: Gamma-secretase subunit APH-1A (265 aa).

At M1 to G2 the chain is on the lumenal side. The chain crosses the membrane as a helical span at residues A3–I23. The Cytoplasmic portion of the chain corresponds to T24–R31. A helical transmembrane segment spans residues V32–V52. The Lumenal segment spans residues W53 to Q68. A helical membrane pass occupies residues Y69–A89. The Cytoplasmic segment spans residues Y90–A118. A helical transmembrane segment spans residues Y119–A139. Residues D140–L158 lie on the Lumenal side of the membrane. The chain crosses the membrane as a helical span at residues T159 to F179. Residues D180–R186 are Cytoplasmic-facing. Residues Y187–N207 form a helical membrane-spanning segment. Topologically, residues P208 to S213 are lumenal. The chain crosses the membrane as a helical span at residues L214–G234. The Cytoplasmic portion of the chain corresponds to S235–D265.

The protein belongs to the APH-1 family. As to quaternary structure, the functional gamma-secretase complex is composed of at least four polypeptides: a presenilin homodimer (PSEN1 or PSEN2), nicastrin (NCSTN), APH1 (APH1A or APH1B) and PSENEN/PEN2. In terms of tissue distribution, widely expressed. Expressed in leukocytes, lung, placenta, small intestine, liver, kidney, spleen thymus, skeletal muscle, heart and brain. Isoform 1 and isoform 2 are nearly expressed at the same level.

It is found in the endoplasmic reticulum membrane. The protein resides in the golgi apparatus. The protein localises to the golgi stack membrane. Functionally, non-catalytic subunit of the gamma-secretase complex, an endoprotease complex that catalyzes the intramembrane cleavage of integral membrane proteins such as Notch receptors and APP (amyloid-beta precursor protein). Required for normal gamma-secretase assembly. The gamma-secretase complex plays a role in Notch and Wnt signaling cascades and regulation of downstream processes via its role in processing key regulatory proteins, and by regulating cytosolic CTNNB1 levels. The sequence is that of Gamma-secretase subunit APH-1A (APH1A) from Homo sapiens (Human).